The chain runs to 117 residues: Large ribosomal subunit protein bL20 (117 aa).

It belongs to the bacterial ribosomal protein bL20 family.

Binds directly to 23S ribosomal RNA and is necessary for the in vitro assembly process of the 50S ribosomal subunit. It is not involved in the protein synthesizing functions of that subunit. The polypeptide is Large ribosomal subunit protein bL20 (Campylobacter fetus subsp. fetus (strain 82-40)).